Consider the following 439-residue polypeptide: Xylose isomerase (439 aa).

Active-site residues include His-101 and Asp-104. 7 residues coordinate Mg(2+): Glu-232, Glu-268, His-271, Asp-296, Asp-307, Asp-309, and Asp-339.

This sequence belongs to the xylose isomerase family. As to quaternary structure, homotetramer. Requires Mg(2+) as cofactor.

It localises to the cytoplasm. The enzyme catalyses alpha-D-xylose = alpha-D-xylulofuranose. The sequence is that of Xylose isomerase from Haemophilus influenzae (strain 86-028NP).